The following is a 281-amino-acid chain: Endonuclease III-like protein 1 (281 aa).

A mitochondrion-targeting transit peptide spans 1-17; the sequence is MCAAAPRGGGRAARRLG. Residues 1–60 are disordered; the sequence is MCAAAPRGGGRAARRLGAATAGSRVPSAAPRYSRRTRRVPIAYEAEPKPESPGPKWEPEN. Residues 15 to 24 are compositionally biased toward low complexity; it reads RLGAATAGSR. In terms of domain architecture, HhH spans 168–192; it reads KYGGDIPGTVEELVKLPGVGPKMAH. The active-site Nucleophile; for N-glycosylase activity is Lys189. 4 residues coordinate [4Fe-4S] cluster: Cys259, Cys266, Cys269, and Cys275.

This sequence belongs to the Nth/MutY family. [4Fe-4S] cluster is required as a cofactor.

The protein localises to the nucleus. It localises to the mitochondrion. It carries out the reaction 2'-deoxyribonucleotide-(2'-deoxyribose 5'-phosphate)-2'-deoxyribonucleotide-DNA = a 3'-end 2'-deoxyribonucleotide-(2,3-dehydro-2,3-deoxyribose 5'-phosphate)-DNA + a 5'-end 5'-phospho-2'-deoxyribonucleoside-DNA + H(+). In terms of biological role, bifunctional DNA N-glycosylase with associated apurinic/apyrimidinic (AP) lyase function that catalyzes the first step in base excision repair (BER), the primary repair pathway for the repair of oxidative DNA damage. The DNA N-glycosylase activity releases the damaged DNA base from DNA by cleaving the N-glycosidic bond, leaving an AP site. The AP lyase activity cleaves the phosphodiester bond 3' to the AP site by a beta-elimination. Primarily recognizes and repairs oxidative base damage of pyrimidines. The chain is Endonuclease III-like protein 1 from Gallus gallus (Chicken).